The sequence spans 122 residues: Large ribosomal subunit protein uL14 (122 aa).

The protein belongs to the universal ribosomal protein uL14 family. As to quaternary structure, part of the 50S ribosomal subunit. Forms a cluster with proteins L3 and L19. In the 70S ribosome, L14 and L19 interact and together make contacts with the 16S rRNA in bridges B5 and B8.

Binds to 23S rRNA. Forms part of two intersubunit bridges in the 70S ribosome. The chain is Large ribosomal subunit protein uL14 from Corynebacterium kroppenstedtii (strain DSM 44385 / JCM 11950 / CIP 105744 / CCUG 35717).